The chain runs to 119 residues: Large ribosomal subunit protein bL20c (119 aa).

The protein belongs to the bacterial ribosomal protein bL20 family.

The protein localises to the plastid. Its subcellular location is the chloroplast. In terms of biological role, binds directly to 23S ribosomal RNA and is necessary for the in vitro assembly process of the 50S ribosomal subunit. It is not involved in the protein synthesizing functions of that subunit. The sequence is that of Large ribosomal subunit protein bL20c from Amborella trichopoda.